We begin with the raw amino-acid sequence, 197 residues long: NADH-quinone oxidoreductase subunit I 2 (197 aa).

4Fe-4S ferredoxin-type domains lie at 42 to 71 (GVIG…IDSH) and 91 to 120 (DRFA…WSPE). The [4Fe-4S] cluster site is built by Cys51, Cys54, Cys57, Cys61, Cys100, Cys103, Cys106, and Cys110. The disordered stretch occupies residues 147 to 197 (APPALDPGAEEPKELAAARKAADKLAAQQQPDQPGPDHPGQPDESGQEGRT). Over residues 156-169 (EEPKELAAARKAAD) the composition is skewed to basic and acidic residues.

It belongs to the complex I 23 kDa subunit family. NDH-1 is composed of 14 different subunits. Subunits NuoA, H, J, K, L, M, N constitute the membrane sector of the complex. The cofactor is [4Fe-4S] cluster.

The protein resides in the cell membrane. The enzyme catalyses a quinone + NADH + 5 H(+)(in) = a quinol + NAD(+) + 4 H(+)(out). NDH-1 shuttles electrons from NADH, via FMN and iron-sulfur (Fe-S) centers, to quinones in the respiratory chain. The immediate electron acceptor for the enzyme in this species is believed to be ubiquinone. Couples the redox reaction to proton translocation (for every two electrons transferred, four hydrogen ions are translocated across the cytoplasmic membrane), and thus conserves the redox energy in a proton gradient. The sequence is that of NADH-quinone oxidoreductase subunit I 2 from Streptomyces coelicolor (strain ATCC BAA-471 / A3(2) / M145).